Here is a 243-residue protein sequence, read N- to C-terminus: LexA repressor 2 (243 aa).

A DNA-binding region (H-T-H motif) is located at residues 48–68 (IREIGDAVGLTSTSSVAHQLR). Catalysis depends on for autocatalytic cleavage activity residues Ser167 and Lys204.

The protein belongs to the peptidase S24 family. In terms of assembly, homodimer.

The catalysed reaction is Hydrolysis of Ala-|-Gly bond in repressor LexA.. Functionally, represses a number of genes involved in the response to DNA damage (SOS response), including recA and lexA. In the presence of single-stranded DNA, RecA interacts with LexA causing an autocatalytic cleavage which disrupts the DNA-binding part of LexA, leading to derepression of the SOS regulon and eventually DNA repair. The chain is LexA repressor 2 from Nocardia farcinica (strain IFM 10152).